A 159-amino-acid polypeptide reads, in one-letter code: NADH-quinone oxidoreductase subunit I (159 aa).

4Fe-4S ferredoxin-type domains are found at residues 51–80 and 90–119; these read RRYE…IEAE and TRYD…EGPN. [4Fe-4S] cluster contacts are provided by Cys60, Cys63, Cys66, Cys70, Cys99, Cys102, Cys105, and Cys109.

It belongs to the complex I 23 kDa subunit family. In terms of assembly, NDH-1 is composed of 14 different subunits. Subunits NuoA, H, J, K, L, M, N constitute the membrane sector of the complex. Requires [4Fe-4S] cluster as cofactor.

It localises to the cell inner membrane. It carries out the reaction a quinone + NADH + 5 H(+)(in) = a quinol + NAD(+) + 4 H(+)(out). Its function is as follows. NDH-1 shuttles electrons from NADH, via FMN and iron-sulfur (Fe-S) centers, to quinones in the respiratory chain. The immediate electron acceptor for the enzyme in this species is believed to be ubiquinone. Couples the redox reaction to proton translocation (for every two electrons transferred, four hydrogen ions are translocated across the cytoplasmic membrane), and thus conserves the redox energy in a proton gradient. This Rickettsia canadensis (strain McKiel) protein is NADH-quinone oxidoreductase subunit I.